The chain runs to 80 residues: Large ribosomal subunit protein bL31 (80 aa).

This sequence belongs to the bacterial ribosomal protein bL31 family. Type A subfamily. Part of the 50S ribosomal subunit.

Functionally, binds the 23S rRNA. This chain is Large ribosomal subunit protein bL31, found in Nostoc punctiforme (strain ATCC 29133 / PCC 73102).